We begin with the raw amino-acid sequence, 32 residues long: Calcitonin (32 aa).

A disulfide bridge links cysteine 1 with cysteine 7. Proline 32 carries the post-translational modification Proline amide.

It belongs to the calcitonin family.

It localises to the secreted. Causes a rapid but short-lived drop in the level of calcium and phosphate in blood by promoting the incorporation of those ions in the bones. The chain is Calcitonin from Aquarana catesbeiana (American bullfrog).